The following is a 442-amino-acid chain: Cell division protein FtsA (442 aa).

The interval 401-428 (VTSYDNDSYDAPEETVYDEPEQKKSDED) is disordered. The segment covering 407 to 419 (DSYDAPEETVYDE) has biased composition (acidic residues).

Belongs to the FtsA/MreB family. Self-interacts. Interacts with FtsZ.

It is found in the cell membrane. Cell division protein that is involved in the assembly of the Z ring. May serve as a membrane anchor for the Z ring. This chain is Cell division protein FtsA, found in Enterococcus hirae.